The sequence spans 346 residues: UPF0283 membrane protein VIBHAR_01918 (346 aa).

The span at 1 to 17 shows a compositional bias: basic and acidic residues; that stretch reads MSELKQKQVFKEKVMHS. A disordered region spans residues 1-28; it reads MSELKQKQVFKEKVMHSEEEDVSPELNT. Transmembrane regions (helical) follow at residues 73 to 93 and 98 to 118; these read LFAT…ITAI and WLAL…LGAL.

It belongs to the UPF0283 family.

The protein localises to the cell inner membrane. This is UPF0283 membrane protein VIBHAR_01918 from Vibrio campbellii (strain ATCC BAA-1116).